Reading from the N-terminus, the 183-residue chain is Calcium-binding protein M (183 aa).

The N-myristoyl glycine moiety is linked to residue Gly2. EF-hand domains follow at residues 25-60 (EEVA…KLPN), 61-96 (YPED…IGKG), 97-132 (SAED…MKNV), and 142-177 (DIEL…SPSL). Positions 74, 76, 78, 80, 85, 110, 112, 114, 121, 155, 157, 159, and 166 each coordinate Ca(2+).

The protein belongs to the recoverin family.

The sequence is that of Calcium-binding protein M (cbpM) from Dictyostelium discoideum (Social amoeba).